A 498-amino-acid chain; its full sequence is Cytochrome P450 71D15 (498 aa).

A helical; Signal-anchor for type II membrane protein transmembrane segment spans residues 3-23; the sequence is LLQLWSALIILVVTYTISLLI. C437 contributes to the heme binding site.

It belongs to the cytochrome P450 family. The cofactor is heme.

The protein localises to the endoplasmic reticulum membrane. The enzyme catalyses (4S)-limonene + reduced [NADPH--hemoprotein reductase] + O2 = (1S,6R)-isopiperitenol + oxidized [NADPH--hemoprotein reductase] + H2O + H(+). Its function is as follows. Hydroxylates (-)-(4S)-limonene to (-)-trans-isopiperitenol, a precursor of (-)-menthol, responsible for the cooling sensation of peppermint. Fluorinated substrate analogs are hydroxylated with the same regio- and stereochemistry. In Mentha piperita (Peppermint), this protein is Cytochrome P450 71D15 (CYP71D15).